The sequence spans 211 residues: MMSPTPEDDRDLVVVRGRLRMMDNGAEHDRERRSYTAWPHLCCGCTIGIILTMFVIATTLLLASLFAFSYMSLESGTCPKEWIGLGYSCMRVAGNNATELEALDMCAQHNSKLVDFTNAKTLVEAIVPFGSTNASFGNIFRLRDSRSTCILPTIGGPISVDCPRTCSVVCQRPRPLSTAASIIRDARIYLRLERRDYYEVYSSILSNAIMK.

At 1–46 (MMSPTPEDDRDLVVVRGRLRMMDNGAEHDRERRSYTAWPHLCCGCT) the chain is on the intravirion side. A helical; Signal-anchor for type II membrane protein membrane pass occupies residues 47–67 (IGIILTMFVIATTLLLASLFA). The Virion surface segment spans residues 68 to 211 (FSYMSLESGT…SSILSNAIMK (144 aa)). 2 N-linked (GlcNAc...) asparagine; by host glycosylation sites follow: Asn96 and Asn133.

This sequence belongs to the herpesviridae HHV-1 UL45 family.

It is found in the virion membrane. The polypeptide is Envelope protein UL45 homolog (UL45H) (Gallid herpesvirus 2 (strain Chicken/Md5/ATCC VR-987) (GaHV-2)).